The following is a 457-amino-acid chain: Argininosuccinate lyase (457 aa).

Belongs to the lyase 1 family. Argininosuccinate lyase subfamily.

The protein resides in the cytoplasm. It catalyses the reaction 2-(N(omega)-L-arginino)succinate = fumarate + L-arginine. Its pathway is amino-acid biosynthesis; L-arginine biosynthesis; L-arginine from L-ornithine and carbamoyl phosphate: step 3/3. This is Argininosuccinate lyase from Escherichia coli O139:H28 (strain E24377A / ETEC).